The chain runs to 691 residues: Putative calcium up-regulated protein I (691 aa).

Positions 47–174 constitute a Ricin B-type lectin domain; it reads SNCYLKEKPQ…NYTSQIWTYN (128 aa).

This sequence belongs to the cup family.

This chain is Putative calcium up-regulated protein I (cupI), found in Dictyostelium discoideum (Social amoeba).